A 335-amino-acid chain; its full sequence is Methionyl-tRNA formyltransferase (335 aa).

A (6S)-5,6,7,8-tetrahydrofolate-binding site is contributed by 122–125; it reads SLLP. Residues 203–222 are disordered; that stretch reads DSHGPLGEPQDPAKVSKAPR.

The protein belongs to the Fmt family.

It carries out the reaction L-methionyl-tRNA(fMet) + (6R)-10-formyltetrahydrofolate = N-formyl-L-methionyl-tRNA(fMet) + (6S)-5,6,7,8-tetrahydrofolate + H(+). Functionally, attaches a formyl group to the free amino group of methionyl-tRNA(fMet). The formyl group appears to play a dual role in the initiator identity of N-formylmethionyl-tRNA by promoting its recognition by IF2 and preventing the misappropriation of this tRNA by the elongation apparatus. The protein is Methionyl-tRNA formyltransferase of Rhodopirellula baltica (strain DSM 10527 / NCIMB 13988 / SH1).